Consider the following 143-residue polypeptide: Large ribosomal subunit protein uL11 (143 aa).

It belongs to the universal ribosomal protein uL11 family. Part of the ribosomal stalk of the 50S ribosomal subunit. Interacts with L10 and the large rRNA to form the base of the stalk. L10 forms an elongated spine to which L12 dimers bind in a sequential fashion forming a multimeric L10(L12)X complex. One or more lysine residues are methylated.

Forms part of the ribosomal stalk which helps the ribosome interact with GTP-bound translation factors. The chain is Large ribosomal subunit protein uL11 from Pseudomonas entomophila (strain L48).